A 253-amino-acid chain; its full sequence is Blue-light photoreceptor (253 aa).

Positions 6 to 79 (KFDVILKALN…AKIRHAINEK (74 aa)) constitute a PAS domain. S-4a-FMN cysteine is present on Cys56. Positions 80–133 (STANVLLKNYRKNGTSFMNELTIEPIYDDNDHLYFVGIQKDVTTEHNYQLELEK) constitute a PAC domain. In terms of domain architecture, STAS spans 142-253 (STPIVPIKEN…STIKEALQFY (112 aa)).

FMN binds covalently to cysteine after exposure to blue light and this bond is spontaneously broken in the dark.

Its function is as follows. Exhibits the same spectroscopical features and blue-light induced photochemistry as plants phototropins, with the reversible formation of a blue-shifted photoproduct, assigned to an FMN-cysteine thiol adduct. Positive regulator in the activation of the general stress transcription factor sigma-B. This chain is Blue-light photoreceptor, found in Listeria innocua serovar 6a (strain ATCC BAA-680 / CLIP 11262).